The chain runs to 135 residues: Large-conductance mechanosensitive channel (135 aa).

The next 2 helical transmembrane spans lie at 10–30 (FAMK…AAFG) and 76–96 (GAFI…FCAI).

The protein belongs to the MscL family. As to quaternary structure, homopentamer.

Its subcellular location is the cell inner membrane. In terms of biological role, channel that opens in response to stretch forces in the membrane lipid bilayer. May participate in the regulation of osmotic pressure changes within the cell. This is Large-conductance mechanosensitive channel from Proteus mirabilis (strain HI4320).